The sequence spans 226 residues: N-(5'-phosphoribosyl)anthranilate isomerase (226 aa).

The protein belongs to the TrpF family.

It catalyses the reaction N-(5-phospho-beta-D-ribosyl)anthranilate = 1-(2-carboxyphenylamino)-1-deoxy-D-ribulose 5-phosphate. Its pathway is amino-acid biosynthesis; L-tryptophan biosynthesis; L-tryptophan from chorismate: step 3/5. This Saccharomyces kudriavzevii (strain ATCC MYA-4449 / AS 2.2408 / CBS 8840 / NBRC 1802 / NCYC 2889) (Yeast) protein is N-(5'-phosphoribosyl)anthranilate isomerase (TRP1).